The following is a 572-amino-acid chain: MSSPFSVPSLIMEEEGRFEAEVAEVEAWWGTDRFRLTKRPYTARDVALLRGTLRQSYASGDMAKKLWRTLRAHQANGTASRTFGALDPVQVAMMAKHLDTVYVSGWQCSSTHTSTNEPGPDLADYPYDTVPNKVEHLFFAQLYHDRKQREARMSMSRAERAHEPYVDYLKPIIADGDTGFGGATATVKLCKLFVERGAAGVHLEDQSSVTKKCGHMAGKVLVAVSEHVNRLVAARLQFDIMGVETVLVARTDAVAATLIQTNVDARDHQFILGATNPRLRNRSLAAVLSDAMSAGKNGRELQAIEDEWLATAQLKTFSDCVRDAIASLNATDADKQRKLQEWSAATSHDKCVPLEQARDIAAGLGVTSLFWDWDLPRTREGFYRFRGSVAAAVVRGRAFAPHADVLWMETSSPNIAECTAFAEGVRAASPGAMLAYNLSPSFNWDASGMTDADMSEFIPRVARLGYVWQFITLAGFHADALVTDTFARDFARRGMLAYVERIQREERSNGVETLQHQKWSGANFYDRVLKTVQGGISSTAAMGKGVTEEQFKGSWTGPGSESSSHVLAKSRM.

104–106 (SGW) contacts substrate. Asp175 is a binding site for Mg(2+). The active-site Proton acceptor is Cys213. Substrate contacts are provided by residues 214-215 (GH), Arg250, 437-441 (NLSPS), and Thr472. Residues 550-572 (QFKGSWTGPGSESSSHVLAKSRM) form a disordered region. Positions 570–572 (SRM) match the Microbody targeting signal motif.

The protein belongs to the isocitrate lyase/PEP mutase superfamily. Isocitrate lyase family. The cofactor is Mg(2+). As to expression, expressed in leaves.

The protein localises to the glyoxysome. The enzyme catalyses D-threo-isocitrate = glyoxylate + succinate. The protein operates within carbohydrate metabolism; glyoxylate cycle; (S)-malate from isocitrate: step 1/2. Its function is as follows. Involved in storage lipid mobilization during the growth of higher plant seedling. This chain is Isocitrate lyase, found in Oryza sativa subsp. japonica (Rice).